A 381-amino-acid chain; its full sequence is MLEKLNNINFNNISNNLNLGIEVGREIQNASWIKSPFFSITGTGADRGVRLFSVASQQPFRPRIKAQLSGSGVSGNTDFEANYDNLEILSQTIYPDAFGNSLRSKIKAYSELERIDFIKESVDSLTTWMNEERDKRIVASLTNDFTNYLYTQTMNVATIRKAIFHARNGLKGDNSKAFPIKPIRATMQSVGNVMVQNTSYIILLDSYQANQLKADSEFKELRKLYAFAGEDKGMLYSGLLGVIDNCPVIDAGVWNKFNVGMPNSSISDSDFMRYLNKANVSSIVTPRQFKEKLNQEKDEKKRSINKEISIGCLIGASAVLLAGSKETRFYIDETVDAGRKSLVGVDCLLGVSKARYQSTDGVVTPYDNQDYAVIGLVSDME.

Positions 287 to 307 (RQFKEKLNQEKDEKKRSINKE) form a coiled coil.

The chain is Major structural protein ORF14 from Helicobacter pylori (strain 35A).